The following is a 307-amino-acid chain: Putative oxidoreductase YceM (307 aa).

This sequence belongs to the Gfo/Idh/MocA family.

This is Putative oxidoreductase YceM (yceM) from Salmonella typhimurium (strain LT2 / SGSC1412 / ATCC 700720).